Here is an 880-residue protein sequence, read N- to C-terminus: MSNSIKVVCRFRPQNRIENEQGAQPVVKFEADDTCALDSNGAAGSFTFDRVFGMSSRQKDIFDFSIKPTVDDILNGYNGTVFAYGQTGAGKSYTMMGTNLDNDDGRGVIPRIVEQIFASILSSPGTIEYTVRVSYMEIYMERIRDLLQPQNDNLPIHEEKNRGVYVKGLLEVYVSSVQEVYEVLKRGGDARVVASTNMNAESSRSHSIFVITITQKNVETGSAKSGQLFLVDLAGSEKVGKTGASGQTLEEAKKINKSLSALGMVINNLTDGKSSHIPYRDSKLTRILQESLGGNSRTTLIINCSPSSYNAEETLSTLRFGMRAKAIKNKAKVNAELSPAELKALLRKAQSQVTTFETYVSTLEGEVQLWRKGESVPKEQWAPPLAGVSGAKAAAAQTPRPSTPSRLATESRAETPVAERSATPGIPIDKDEREEFLRRENELQDQITEKETQIAAAEKTLRDTKEELTYLKERDTKVNKDNEKLTSEANEFKMQLERLAFESKEAQITMDSLKEANAELTAELDELKQQLLNVKMSAKESTAALDEKEKRKAEKMAQMMAGFDLGGDVFSENEATIKKVIDHIDSLHEQSSAGEAIPPDEFEELKAKLVETQGIVRQAELSMFGSSSNDANVKRREELEQRLQVLEQEYEDLLERNLGEGDVAEIKERLEKAYSNNQDIKVELVEDLKKEVAQKSAEIEKFKAVNEDLQQRVKSGSASNGTAPGSASGKTVQQQIAEFDVMKKSLMRDLQNRCERVVELEISLDETREQYNNVLRSSNNRAQQKKMAFLERNLEQLTHVQRQLVEQNGSLKKEVAIAERKLIARNERIQSLESLLQDSQEKLTTASHRYGFPLYFRIDFNHTSIALLTFPLDSKPNCQQ.

Residues 4 to 327 enclose the Kinesin motor domain; sequence SIKVVCRFRP…LRFGMRAKAI (324 aa). Residues 85 to 92 and 235 to 242 each bind ATP; these read GQTGAGKS and GSEKVGKT. Residues 388 to 426 form a disordered region; it reads VSGAKAAAAQTPRPSTPSRLATESRAETPVAERSATPGI. A compositionally biased stretch (polar residues) spans 399–408; sequence PRPSTPSRLA. Residues 428–849 adopt a coiled-coil conformation; that stretch reads IDKDEREEFL…QEKLTTASHR (422 aa).

This sequence belongs to the TRAFAC class myosin-kinesin ATPase superfamily. Kinesin family. Kinesin subfamily.

The protein localises to the cytoplasm. It localises to the cytoskeleton. Functionally, kinesin is a microtubule-associated force-producing protein that may play a role in organelle transport. Its motor activity is directed toward the microtubule's plus end. This is Kinesin heavy chain (klp1) from Botryotinia fuckeliana (Noble rot fungus).